Reading from the N-terminus, the 90-residue chain is UPF0184 protein (90 aa).

Residues 16 to 78 (DETKEEMVEL…QSLETEQNTE (63 aa)) adopt a coiled-coil conformation. Positions 57 to 90 (SQQARQELQAERQSLETEQNTEPSTKSDQEQKKQ) are disordered. The segment covering 81–90 (TKSDQEQKKQ) has biased composition (basic and acidic residues).

This sequence belongs to the UPF0184 (EST00098) family.

This is UPF0184 protein from Branchiostoma floridae (Florida lancelet).